Consider the following 663-residue polypeptide: Translation factor GUF1, mitochondrial (663 aa).

A mitochondrion-targeting transit peptide spans 1 to 44; it reads MRGCLQSVRWLTTALRRPAPQLSCLPFQPFASTSRLFSSCASRA. The region spanning 65–245 is the tr-type G domain; the sequence is ERFRNFCIVA…TIVEQIPAPV (181 aa). Residues 74–81, 138–142, and 192–195 each bind GTP; these read AHVDHGKS, DTPGH, and NKVD.

Belongs to the TRAFAC class translation factor GTPase superfamily. Classic translation factor GTPase family. LepA subfamily.

The protein resides in the mitochondrion inner membrane. It carries out the reaction GTP + H2O = GDP + phosphate + H(+). Functionally, promotes mitochondrial protein synthesis. May act as a fidelity factor of the translation reaction, by catalyzing a one-codon backward translocation of tRNAs on improperly translocated ribosomes. Binds to mitochondrial ribosomes in a GTP-dependent manner. The chain is Translation factor GUF1, mitochondrial from Coccidioides posadasii (strain C735) (Valley fever fungus).